The chain runs to 122 residues: uncharacterized protein (122 aa).

Positions 1-28 (MVPGPPESVVRFFLWFCFLLPPTRKASC) are cleaved as a signal peptide. A glycan (N-linked (GlcNAc...) asparagine) is linked at asparagine 49.

The protein resides in the secreted. This is an uncharacterized protein from Homo sapiens (Human).